Reading from the N-terminus, the 301-residue chain is UDP-N-acetylenolpyruvoylglucosamine reductase (301 aa).

One can recognise an FAD-binding PCMH-type domain in the interval 29–195 (KIGGPADVFV…VEAIFSLTRG (167 aa)). The active site involves Arg-174. The active-site Proton donor is the Ser-224. Glu-294 is an active-site residue.

Belongs to the MurB family. It depends on FAD as a cofactor.

The protein resides in the cytoplasm. It carries out the reaction UDP-N-acetyl-alpha-D-muramate + NADP(+) = UDP-N-acetyl-3-O-(1-carboxyvinyl)-alpha-D-glucosamine + NADPH + H(+). The protein operates within cell wall biogenesis; peptidoglycan biosynthesis. Cell wall formation. The chain is UDP-N-acetylenolpyruvoylglucosamine reductase from Halalkalibacterium halodurans (strain ATCC BAA-125 / DSM 18197 / FERM 7344 / JCM 9153 / C-125) (Bacillus halodurans).